Here is a 453-residue protein sequence, read N- to C-terminus: Ribulose bisphosphate carboxylase large chain (453 aa).

Residues 1-2 constitute a propeptide that is removed on maturation; sequence MS. An N-acetylproline modification is found at Pro-3. Lys-14 bears the N6,N6,N6-trimethyllysine mark. Residues Asn-123 and Thr-173 each contribute to the substrate site. Lys-175 functions as the Proton acceptor in the catalytic mechanism. Lys-177 is a substrate binding site. Positions 201, 203, and 204 each coordinate Mg(2+). Lys-201 is modified (N6-carboxylysine). The active-site Proton acceptor is His-294. Positions 295, 327, and 379 each coordinate substrate.

It belongs to the RuBisCO large chain family. Type I subfamily. In terms of assembly, heterohexadecamer of 8 large chains and 8 small chains; disulfide-linked. The disulfide link is formed within the large subunit homodimers. Requires Mg(2+) as cofactor. The disulfide bond which can form in the large chain dimeric partners within the hexadecamer appears to be associated with oxidative stress and protein turnover.

It localises to the plastid. Its subcellular location is the chloroplast. It carries out the reaction 2 (2R)-3-phosphoglycerate + 2 H(+) = D-ribulose 1,5-bisphosphate + CO2 + H2O. It catalyses the reaction D-ribulose 1,5-bisphosphate + O2 = 2-phosphoglycolate + (2R)-3-phosphoglycerate + 2 H(+). Its function is as follows. RuBisCO catalyzes two reactions: the carboxylation of D-ribulose 1,5-bisphosphate, the primary event in carbon dioxide fixation, as well as the oxidative fragmentation of the pentose substrate in the photorespiration process. Both reactions occur simultaneously and in competition at the same active site. This chain is Ribulose bisphosphate carboxylase large chain, found in Rubia tinctorum (Madder).